The chain runs to 197 residues: Holliday junction branch migration complex subunit RuvA (197 aa).

Residues 1 to 64 are domain I; sequence MIARLAGKVA…QDAIELYGFA (64 aa). The segment at 65-141 is domain II; that stretch reads SEDEEAVFRA…LALLARAAGP (77 aa). Residues 141–145 form a flexible linker region; it reads PARAK. The domain III stretch occupies residues 146–197; sequence PGAGVVEQLRQALVNLGYKPPQADAAADALRDEAEGKKLDELLREALKRLRG.

This sequence belongs to the RuvA family. Homotetramer. Forms an RuvA(8)-RuvB(12)-Holliday junction (HJ) complex. HJ DNA is sandwiched between 2 RuvA tetramers; dsDNA enters through RuvA and exits via RuvB. An RuvB hexamer assembles on each DNA strand where it exits the tetramer. Each RuvB hexamer is contacted by two RuvA subunits (via domain III) on 2 adjacent RuvB subunits; this complex drives branch migration. In the full resolvosome a probable DNA-RuvA(4)-RuvB(12)-RuvC(2) complex forms which resolves the HJ.

The protein localises to the cytoplasm. Its function is as follows. The RuvA-RuvB-RuvC complex processes Holliday junction (HJ) DNA during genetic recombination and DNA repair, while the RuvA-RuvB complex plays an important role in the rescue of blocked DNA replication forks via replication fork reversal (RFR). RuvA specifically binds to HJ cruciform DNA, conferring on it an open structure. The RuvB hexamer acts as an ATP-dependent pump, pulling dsDNA into and through the RuvAB complex. HJ branch migration allows RuvC to scan DNA until it finds its consensus sequence, where it cleaves and resolves the cruciform DNA. The protein is Holliday junction branch migration complex subunit RuvA of Anaeromyxobacter sp. (strain Fw109-5).